The following is a 135-amino-acid chain: MARRQTPPGLPSQRQLRAGEIVRHALAEIISREDFRDPDLSNVIVTVGEVRCSPDLKHANIFVTPLGDDSEEGRKRLADALTRAKGFLRTRLGREIELKFTPELHFIADSSYDEATAIDRLLNDPRVRRDVESEG.

This sequence belongs to the RbfA family. As to quaternary structure, monomer. Binds 30S ribosomal subunits, but not 50S ribosomal subunits or 70S ribosomes.

Its subcellular location is the cytoplasm. In terms of biological role, one of several proteins that assist in the late maturation steps of the functional core of the 30S ribosomal subunit. Associates with free 30S ribosomal subunits (but not with 30S subunits that are part of 70S ribosomes or polysomes). Required for efficient processing of 16S rRNA. May interact with the 5'-terminal helix region of 16S rRNA. The sequence is that of Ribosome-binding factor A from Hyphomonas neptunium (strain ATCC 15444).